Here is a 673-residue protein sequence, read N- to C-terminus: DNA ligase (673 aa).

Residues 33–37 (DSVYD), 82–83 (SL), and E117 contribute to the NAD(+) site. Residue K119 is the N6-AMP-lysine intermediate of the active site. Residues R140, E177, K295, and K319 each contribute to the NAD(+) site. Residues C413, C416, C431, and C436 each coordinate Zn(2+). The region spanning 595–673 (AVSQVLAGKK…EAELLALDPK (79 aa)) is the BRCT domain.

It belongs to the NAD-dependent DNA ligase family. LigA subfamily. Mg(2+) serves as cofactor. Requires Mn(2+) as cofactor.

It catalyses the reaction NAD(+) + (deoxyribonucleotide)n-3'-hydroxyl + 5'-phospho-(deoxyribonucleotide)m = (deoxyribonucleotide)n+m + AMP + beta-nicotinamide D-nucleotide.. Its function is as follows. DNA ligase that catalyzes the formation of phosphodiester linkages between 5'-phosphoryl and 3'-hydroxyl groups in double-stranded DNA using NAD as a coenzyme and as the energy source for the reaction. It is essential for DNA replication and repair of damaged DNA. The sequence is that of DNA ligase from Synechococcus sp. (strain JA-3-3Ab) (Cyanobacteria bacterium Yellowstone A-Prime).